The chain runs to 144 residues: MRLNTLSPSLGSRKNHKRLGRGIGSGFGKTAGRGHKGQKSRSGGHVNRGFEGGQMPIYRRIPKFGFNSRKKNITAEVRLSDISKLSTDIIDLKVLKKENIINKNIKYVKIILSGKLEVALTLHGLRVTRGARLAIENYGGKIEG.

Residues 1–12 (MRLNTLSPSLGS) show a composition bias toward polar residues. Residues 1–51 (MRLNTLSPSLGSRKNHKRLGRGIGSGFGKTAGRGHKGQKSRSGGHVNRGFE) are disordered. Residues 21 to 31 (RGIGSGFGKTA) are compositionally biased toward gly residues.

Belongs to the universal ribosomal protein uL15 family. In terms of assembly, part of the 50S ribosomal subunit.

Its function is as follows. Binds to the 23S rRNA. In Buchnera aphidicola subsp. Schizaphis graminum (strain Sg), this protein is Large ribosomal subunit protein uL15.